The primary structure comprises 597 residues: UvrABC system protein C (597 aa).

The 79-residue stretch at 15-93 (DNPGVYQYYD…IKTLQPRYNV (79 aa)) folds into the GIY-YIG domain. The UVR domain maps to 207–242 (KESLKDFKKLMNNYAQNLQFEEAQKIKEKIEVLENY).

The protein belongs to the UvrC family. Interacts with UvrB in an incision complex.

The protein localises to the cytoplasm. Its function is as follows. The UvrABC repair system catalyzes the recognition and processing of DNA lesions. UvrC both incises the 5' and 3' sides of the lesion. The N-terminal half is responsible for the 3' incision and the C-terminal half is responsible for the 5' incision. The chain is UvrABC system protein C from Flavobacterium johnsoniae (strain ATCC 17061 / DSM 2064 / JCM 8514 / BCRC 14874 / CCUG 350202 / NBRC 14942 / NCIMB 11054 / UW101) (Cytophaga johnsonae).